We begin with the raw amino-acid sequence, 373 residues long: Anhydro-N-acetylmuramic acid kinase (373 aa).

12 to 19 (GTSLDGVD) lines the ATP pocket.

This sequence belongs to the anhydro-N-acetylmuramic acid kinase family.

The enzyme catalyses 1,6-anhydro-N-acetyl-beta-muramate + ATP + H2O = N-acetyl-D-muramate 6-phosphate + ADP + H(+). Its pathway is amino-sugar metabolism; 1,6-anhydro-N-acetylmuramate degradation. The protein operates within cell wall biogenesis; peptidoglycan recycling. Catalyzes the specific phosphorylation of 1,6-anhydro-N-acetylmuramic acid (anhMurNAc) with the simultaneous cleavage of the 1,6-anhydro ring, generating MurNAc-6-P. Is required for the utilization of anhMurNAc either imported from the medium or derived from its own cell wall murein, and thus plays a role in cell wall recycling. This Salmonella gallinarum (strain 287/91 / NCTC 13346) protein is Anhydro-N-acetylmuramic acid kinase.